The chain runs to 123 residues: Large ribosomal subunit protein uL14 (123 aa).

Belongs to the universal ribosomal protein uL14 family. As to quaternary structure, part of the 50S ribosomal subunit. Forms a cluster with proteins L3 and L19. In the 70S ribosome, L14 and L19 interact and together make contacts with the 16S rRNA in bridges B5 and B8.

In terms of biological role, binds to 23S rRNA. Forms part of two intersubunit bridges in the 70S ribosome. This is Large ribosomal subunit protein uL14 from Tropheryma whipplei (strain TW08/27) (Whipple's bacillus).